The following is a 198-amino-acid chain: Holliday junction resolvase RecU (198 aa).

Residues Thr83, Asp85, Glu98, and Gln117 each coordinate Mg(2+).

It belongs to the RecU family. Mg(2+) serves as cofactor.

It localises to the cytoplasm. It carries out the reaction Endonucleolytic cleavage at a junction such as a reciprocal single-stranded crossover between two homologous DNA duplexes (Holliday junction).. Endonuclease that resolves Holliday junction intermediates in genetic recombination. Cleaves mobile four-strand junctions by introducing symmetrical nicks in paired strands. Promotes annealing of linear ssDNA with homologous dsDNA. Required for DNA repair, homologous recombination and chromosome segregation. The chain is Holliday junction resolvase RecU from Streptococcus thermophilus (strain CNRZ 1066).